A 205-amino-acid polypeptide reads, in one-letter code: Guanylate kinase (205 aa).

Positions 6 to 184 (GLLLVVSGPS…SAKEIEGIIS (179 aa)) constitute a Guanylate kinase-like domain. 13–20 (GPSGAGKG) contributes to the ATP binding site.

It belongs to the guanylate kinase family.

It is found in the cytoplasm. It catalyses the reaction GMP + ATP = GDP + ADP. Functionally, essential for recycling GMP and indirectly, cGMP. In Clostridioides difficile (strain 630) (Peptoclostridium difficile), this protein is Guanylate kinase.